The primary structure comprises 1042 residues: Sarcoplasmic/endoplasmic reticulum calcium ATPase 2 (1042 aa).

The Cytoplasmic segment spans residues 1 to 48 (MENAHTKTVEEVLGHFGVNESTGLSLEQVKKLKERWGSNELPAEEGKT). At Ser-38 the chain carries Phosphoserine. A helical membrane pass occupies residues 49–69 (LLELVIEQFEDLLVRILLLAA). Residues 70–89 (CISFVLAWFEEGEETITAFV) lie on the Lumenal side of the membrane. Residues 90–110 (EPFVILLILVANAIVGVWQER) form a helical membrane-spanning segment. The Cytoplasmic segment spans residues 111–253 (NAENAIEALK…QERTPLQQKL (143 aa)). The chain crosses the membrane as a helical span at residues 254-273 (DEFGEQLSKVISLICIAVWI). Residues 274–295 (INIGHFNDPVHGGSWIRGAIYY) are Lumenal-facing. 3'-nitrotyrosine occurs at positions 294 and 295. The helical transmembrane segment at 296 to 313 (FKIAVALAVAAIPEGLPA) threads the bilayer. Positions 304, 305, 307, and 309 each coordinate Ca(2+). The Cytoplasmic portion of the chain corresponds to 314–756 (VITTCLALGT…EEGRAIYNNM (443 aa)). Residue Asp-351 is the 4-aspartylphosphate intermediate of the active site. Residues Asp-351 and Thr-353 each contribute to the Mg(2+) site. An ATP-binding site is contributed by Thr-353. Thr-441 is modified (phosphothreonine). Residues Glu-442, Arg-489, and Lys-514 each coordinate ATP. Residue Ser-531 is modified to Phosphoserine. Arg-559 provides a ligand contact to ATP. The interaction with HAX1 stretch occupies residues 575 to 594 (MHLKDSANFIKYETNLTFVG). Position 580 is a phosphoserine (Ser-580). ATP is bound by residues Thr-624, Gly-625, and Asp-626. At Ser-663 the chain carries Phosphoserine. Arg-677 and Lys-683 together coordinate ATP. Residue Asp-702 participates in Mg(2+) binding. Asn-705 provides a ligand contact to ATP. A helical transmembrane segment spans residues 757 to 776 (KQFIRYLISSNVGEVVCIFL). Ca(2+)-binding residues include Asn-767 and Glu-770. The Lumenal segment spans residues 777–786 (TAALGFPEAL). Residues 787 to 807 (IPVQLLWVNLVTDGLPATALG) traverse the membrane as a helical segment. The interaction with PLN stretch occupies residues 787 to 807 (IPVQLLWVNLVTDGLPATALG). Residues 788–1042 (PVQLLWVNLV…DTNFSDLLWS (255 aa)) form an interaction with TMEM64 and PDIA3 region. Asn-795, Thr-798, and Asp-799 together coordinate Ca(2+). The Cytoplasmic segment spans residues 808 to 827 (FNPPDLDIMNKPPRNPKEPL). A helical membrane pass occupies residues 828–850 (ISGWLFFRYLAIGCYVGAATVGA). Topologically, residues 851–896 (AAWWFIAADGGPRVSFYQLSHFLQCKEDNPDFEGVDCAIFESPYPM) are lumenal. Cys-875 and Cys-887 are joined by a disulfide. Residues 897–916 (TMALSVLVTIEMCNALNSLS) traverse the membrane as a helical segment. Residue Glu-907 coordinates Ca(2+). Topologically, residues 917–929 (ENQSLLRMPPWEN) are cytoplasmic. The helical transmembrane segment at 930 to 948 (IWLVGSICLSMSLHFLILY) threads the bilayer. The segment at 931–942 (WLVGSICLSMSL) is interaction with PLN. Residues 949–963 (VEPLPLIFQITPLNV) lie on the Lumenal side of the membrane. A helical transmembrane segment spans residues 964 to 984 (TQWLMVLKISLPVILMDETLK). Residues 985–1042 (FVARNYLEPGKECVQPAPQSCSLWACTEGVSWPFVLLIVPLVMWVYSTDTNFSDLLWS) lie on the Cytoplasmic side of the membrane.

The protein belongs to the cation transport ATPase (P-type) (TC 3.A.3) family. Type IIA subfamily. Interacts with sarcolipin (SLN); the interaction inhibits ATP2A2 Ca(2+) affinity. Interacts with phospholamban (PLN); the interaction inhibits ATP2A2 Ca(2+) affinity. Interacts with myoregulin (MRLN). Interacts with ARLN and ERLN; the interactions inhibit ATP2A2 Ca(2+) affinity. Interacts with SRTIT1/DWORF; the interaction results in activation of ATP2A2. Interacts with the monomeric forms of SLN, PLN, ARLN, ERLN and STRI1/DWORF. Interacts with HAX1. Interacts with S100A8 and S100A9. Interacts with SLC35G1 and STIM1. Interacts with TMEM203. Interacts with TMEM64 and PDIA3. Interacts with TMX1. Interacts with TMX2. Interacts with VMP1; VMP1 competes with PLN and SLN to prevent them from forming an inhibitory complex with ATP2A2. Interacts with ULK1. Interacts with TUNAR. Interacts with FLVCR2; this interaction occurs in the absence of heme and promotes ATP2A2 proteasomal degradation; this complex is dissociated upon heme binding. Interacts with FNIP1. As to quaternary structure, interacts with TRAM2 (via C-terminus). Mg(2+) serves as cofactor. Nitrated under oxidative stress. Nitration on the two tyrosine residues inhibits catalytic activity. In terms of processing, serotonylated on Gln residues by TGM2 in response to hypoxia, leading to its inactivation. As to expression, isoform 2 is highly expressed in heart and slow twitch skeletal muscle. Isoform 1 is widely expressed.

The protein resides in the endoplasmic reticulum membrane. Its subcellular location is the sarcoplasmic reticulum membrane. It carries out the reaction Ca(2+)(in) + ATP + H2O = Ca(2+)(out) + ADP + phosphate + H(+). With respect to regulation, has different conformational states with differential Ca2+ affinity. The E1 conformational state (active form) shows high Ca(2+) affinity, while the E2 state exhibits low Ca(2+) affinity. Binding of ATP allosterically increases its affinity for subsequent binding of Ca2+. Reversibly inhibited by phospholamban (PLN) at low calcium concentrations. PLN inhibits ATP2A2 Ca(2+) affinity by disrupting its allosteric activation by ATP. Inhibited by sarcolipin (SLN) and myoregulin (MRLN). The inhibition is blocked by VMP1. Enhanced by STRIT1/DWORF; STRIT1 increases activity by displacing sarcolipin (SLN), phospholamban (PLN) and myoregulin (MRLN). Stabilizes SERCA2 in its E2 state. Its function is as follows. This magnesium-dependent enzyme catalyzes the hydrolysis of ATP coupled with the translocation of calcium from the cytosol to the sarcoplasmic reticulum lumen. Involved in autophagy in response to starvation. Upon interaction with VMP1 and activation, controls ER-isolation membrane contacts for autophagosome formation. Also modulates ER contacts with lipid droplets, mitochondria and endosomes. In coordination with FLVCR2 mediates heme-stimulated switching from mitochondrial ATP synthesis to thermogenesis. In terms of biological role, involved in the regulation of the contraction/relaxation cycle. Acts as a regulator of TNFSF11-mediated Ca(2+) signaling pathways via its interaction with TMEM64 which is critical for the TNFSF11-induced CREB1 activation and mitochondrial ROS generation necessary for proper osteoclast generation. Association between TMEM64 and SERCA2 in the ER leads to cytosolic Ca(2+) spiking for activation of NFATC1 and production of mitochondrial ROS, thereby triggering Ca(2+) signaling cascades that promote osteoclast differentiation and activation. This is Sarcoplasmic/endoplasmic reticulum calcium ATPase 2 (ATP2A2) from Oryctolagus cuniculus (Rabbit).